The following is a 431-amino-acid chain: Citrate synthase (431 aa).

Active-site residues include H306 and D364.

The protein belongs to the citrate synthase family.

It catalyses the reaction oxaloacetate + acetyl-CoA + H2O = citrate + CoA + H(+). Its pathway is carbohydrate metabolism; tricarboxylic acid cycle; isocitrate from oxaloacetate: step 1/2. This chain is Citrate synthase (gltA), found in Bartonella henselae (strain ATCC 49882 / DSM 28221 / CCUG 30454 / Houston 1) (Rochalimaea henselae).